We begin with the raw amino-acid sequence, 450 residues long: 3-phosphoshikimate 1-carboxyvinyltransferase (450 aa).

Residues lysine 28, serine 29, and arginine 33 each contribute to the 3-phosphoshikimate site. Phosphoenolpyruvate is bound at residue lysine 28. Residues glycine 100 and arginine 128 each contribute to the phosphoenolpyruvate site. 3-phosphoshikimate contacts are provided by serine 173, glutamine 175, aspartate 326, and lysine 353. Glutamine 175 serves as a coordination point for phosphoenolpyruvate. Aspartate 326 (proton acceptor) is an active-site residue. Phosphoenolpyruvate-binding residues include arginine 357 and arginine 402.

This sequence belongs to the EPSP synthase family. As to quaternary structure, monomer.

It is found in the cytoplasm. It carries out the reaction 3-phosphoshikimate + phosphoenolpyruvate = 5-O-(1-carboxyvinyl)-3-phosphoshikimate + phosphate. Its pathway is metabolic intermediate biosynthesis; chorismate biosynthesis; chorismate from D-erythrose 4-phosphate and phosphoenolpyruvate: step 6/7. Its function is as follows. Catalyzes the transfer of the enolpyruvyl moiety of phosphoenolpyruvate (PEP) to the 5-hydroxyl of shikimate-3-phosphate (S3P) to produce enolpyruvyl shikimate-3-phosphate and inorganic phosphate. This Brucella abortus (strain S19) protein is 3-phosphoshikimate 1-carboxyvinyltransferase.